We begin with the raw amino-acid sequence, 340 residues long: L-threonine 3-dehydrogenase (340 aa).

Cysteine 38 lines the Zn(2+) pocket. Catalysis depends on charge relay system residues threonine 40 and histidine 43. Residues histidine 63, glutamate 64, cysteine 93, cysteine 96, cysteine 99, and cysteine 107 each coordinate Zn(2+). NAD(+) contacts are provided by residues isoleucine 175, aspartate 195, arginine 200, 261 to 263 (LGI), and 285 to 286 (IY).

It belongs to the zinc-containing alcohol dehydrogenase family. Homotetramer. It depends on Zn(2+) as a cofactor.

Its subcellular location is the cytoplasm. The catalysed reaction is L-threonine + NAD(+) = (2S)-2-amino-3-oxobutanoate + NADH + H(+). The protein operates within amino-acid degradation; L-threonine degradation via oxydo-reductase pathway; glycine from L-threonine: step 1/2. Its function is as follows. Catalyzes the NAD(+)-dependent oxidation of L-threonine to 2-amino-3-ketobutyrate. The protein is L-threonine 3-dehydrogenase of Xanthomonas axonopodis pv. citri (strain 306).